Reading from the N-terminus, the 427-residue chain is Serine hydroxymethyltransferase (427 aa).

Residue 120–122 coordinates (6S)-5,6,7,8-tetrahydrofolate; it reads GHI. Residue Lys226 is modified to N6-(pyridoxal phosphate)lysine.

The protein belongs to the SHMT family. As to quaternary structure, homodimer. Pyridoxal 5'-phosphate serves as cofactor.

Its subcellular location is the cytoplasm. It functions in the pathway amino-acid biosynthesis; glycine biosynthesis; glycine from L-serine: step 1/1. Its function is as follows. Catalyzes the reversible interconversion of serine and glycine with a modified folate serving as the one-carbon carrier. Also exhibits a pteridine-independent aldolase activity toward beta-hydroxyamino acids, producing glycine and aldehydes, via a retro-aldol mechanism. In Pyrococcus abyssi (strain GE5 / Orsay), this protein is Serine hydroxymethyltransferase.